We begin with the raw amino-acid sequence, 686 residues long: XK-related protein 5 (686 aa).

5 helical membrane-spanning segments follow: residues 33 to 53 (LLWG…QALS), 205 to 225 (HFWV…WLVA), 239 to 259 (LFNL…WDSP), 265 to 285 (VTFY…ATDF), and 297 to 317 (IAGV…YYSL). Disordered regions lie at residues 340–362 (DKTE…ESSG), 444–470 (LQRK…NSSA), and 490–589 (FASD…VGLA). Polar residues-rich tracts occupy residues 455-470 (LPSS…NSSA) and 490-509 (FASD…TQGE). Residues 523-536 (QGKGTGGQQRGGEG) show a composition bias toward gly residues. A compositionally biased stretch (polar residues) spans 550–567 (VATSSQQEGSPATLQTAH).

This sequence belongs to the XK family.

It is found in the cell membrane. The protein is XK-related protein 5 of Pan troglodytes (Chimpanzee).